The sequence spans 272 residues: uncharacterized protein (272 aa).

It localises to the periplasm. Functionally, may be involved in ulvan degradation. Ulvan is the main polysaccharide component of the Ulvales (green seaweed) cell wall. It is composed of disaccharide building blocks comprising 3-sulfated rhamnose (Rha3S) linked to D-glucuronic acid (GlcA), L-iduronic acid (IduA), or D-xylose (Xyl). This is an uncharacterized protein from Formosa agariphila (strain DSM 15362 / KCTC 12365 / LMG 23005 / KMM 3901 / M-2Alg 35-1).